Consider the following 685-residue polypeptide: Polyphosphate kinase (685 aa).

An ATP-binding site is contributed by N45. Mg(2+) contacts are provided by R375 and R405. H435 acts as the Phosphohistidine intermediate in catalysis. Y468, R564, and H592 together coordinate ATP.

It belongs to the polyphosphate kinase 1 (PPK1) family. Mg(2+) serves as cofactor. Post-translationally, an intermediate of this reaction is the autophosphorylated ppk in which a phosphate is covalently linked to a histidine residue through a N-P bond.

The catalysed reaction is [phosphate](n) + ATP = [phosphate](n+1) + ADP. In terms of biological role, catalyzes the reversible transfer of the terminal phosphate of ATP to form a long-chain polyphosphate (polyP). The chain is Polyphosphate kinase from Neisseria meningitidis serogroup B (strain ATCC BAA-335 / MC58).